Here is a 318-residue protein sequence, read N- to C-terminus: 2-keto-3-deoxygluconate permease (318 aa).

Helical transmembrane passes span 10–30, 42–62, 82–102, 109–129, 139–159, 163–183, 201–221, 224–244, 257–277, and 288–308; these read LPGG…TLWP, GLIS…GATI, IAVA…GGIP, LSVL…YAAL, AGAV…LILG, LATF…LGFA, TLVP…TIVH, ASGV…LLLA, VAAS…AGMA, and TALV…LTAL.

The protein belongs to the KdgT transporter family.

Its subcellular location is the cell inner membrane. It carries out the reaction 2-dehydro-3-deoxy-D-gluconate(in) + H(+)(in) = 2-dehydro-3-deoxy-D-gluconate(out) + H(+)(out). Catalyzes the proton-dependent uptake of 2-keto-3-deoxygluconate (KDG) into the cell. The polypeptide is 2-keto-3-deoxygluconate permease (Xanthomonas oryzae pv. oryzae (strain MAFF 311018)).